A 466-amino-acid chain; its full sequence is Probable Xaa-Pro aminopeptidase pepP (466 aa).

Aspartate 264, aspartate 275, glutamate 398, and glutamate 438 together coordinate Mn(2+).

The protein belongs to the peptidase M24B family. Requires Mn(2+) as cofactor.

The enzyme catalyses Release of any N-terminal amino acid, including proline, that is linked to proline, even from a dipeptide or tripeptide.. Functionally, catalyzes the removal of a penultimate prolyl residue from the N-termini of peptides. The polypeptide is Probable Xaa-Pro aminopeptidase pepP (pepP) (Aspergillus clavatus (strain ATCC 1007 / CBS 513.65 / DSM 816 / NCTC 3887 / NRRL 1 / QM 1276 / 107)).